The chain runs to 109 residues: ATP synthase subunit c (109 aa).

Transmembrane regions (helical) follow at residues 42–62 and 88–108; these read YIGT…QGFS and LALA…IIFV.

It belongs to the ATPase C chain family. In terms of assembly, F-type ATPases have 2 components, F(1) - the catalytic core - and F(0) - the membrane proton channel. F(1) has five subunits: alpha(3), beta(3), gamma(1), delta(1), epsilon(1). F(0) has three main subunits: a(1), b(2) and c(10-14). The alpha and beta chains form an alternating ring which encloses part of the gamma chain. F(1) is attached to F(0) by a central stalk formed by the gamma and epsilon chains, while a peripheral stalk is formed by the delta and b chains.

It is found in the cell membrane. Functionally, f(1)F(0) ATP synthase produces ATP from ADP in the presence of a proton or sodium gradient. F-type ATPases consist of two structural domains, F(1) containing the extramembraneous catalytic core and F(0) containing the membrane proton channel, linked together by a central stalk and a peripheral stalk. During catalysis, ATP synthesis in the catalytic domain of F(1) is coupled via a rotary mechanism of the central stalk subunits to proton translocation. In terms of biological role, key component of the F(0) channel; it plays a direct role in translocation across the membrane. A homomeric c-ring of between 10-14 subunits forms the central stalk rotor element with the F(1) delta and epsilon subunits. The chain is ATP synthase subunit c from Ureaplasma urealyticum serovar 10 (strain ATCC 33699 / Western).